The following is a 214-amino-acid chain: tRNA (guanine-N(7)-)-methyltransferase (214 aa).

The S-adenosyl-L-methionine site is built by Glu-44, Glu-69, Asp-96, and Asp-118. The active site involves Asp-118. Substrate contacts are provided by residues Lys-122, Asp-154, and 191–194 (TEYE).

The protein belongs to the class I-like SAM-binding methyltransferase superfamily. TrmB family.

The catalysed reaction is guanosine(46) in tRNA + S-adenosyl-L-methionine = N(7)-methylguanosine(46) in tRNA + S-adenosyl-L-homocysteine. Its pathway is tRNA modification; N(7)-methylguanine-tRNA biosynthesis. In terms of biological role, catalyzes the formation of N(7)-methylguanine at position 46 (m7G46) in tRNA. The polypeptide is tRNA (guanine-N(7)-)-methyltransferase (Listeria monocytogenes serotype 4b (strain F2365)).